The following is a 149-amino-acid chain: Large-conductance mechanosensitive channel (149 aa).

The next 3 membrane-spanning stretches (helical) occupy residues 10 to 30 (FALKGNVMDLAVGVIIGGAFA), 41 to 61 (IMPIVAFIVGGEINFKNMFLI), and 87 to 107 (GSFITVLINFLILAFIIFMMV).

It belongs to the MscL family. As to quaternary structure, homopentamer.

It localises to the cell inner membrane. Its function is as follows. Channel that opens in response to stretch forces in the membrane lipid bilayer. May participate in the regulation of osmotic pressure changes within the cell. This Psychrobacter cryohalolentis (strain ATCC BAA-1226 / DSM 17306 / VKM B-2378 / K5) protein is Large-conductance mechanosensitive channel.